Here is a 671-residue protein sequence, read N- to C-terminus: tRNA(Met) cytidine acetyltransferase TmcA (671 aa).

Residues Gln-180, 202–211 (GRGKSALAGQ), and Arg-319 each bind ATP. The N-acetyltransferase domain occupies 356–531 (QTLWRSEPET…SGCYTAMALL (176 aa)). Acetyl-CoA is bound by residues 461–463 (IAV), 468–474 (QREGTGR), Glu-499, and Arg-506.

The protein belongs to the RNA cytidine acetyltransferase family. TmcA subfamily.

It localises to the cytoplasm. The catalysed reaction is cytidine(34) in elongator tRNA(Met) + acetyl-CoA + ATP + H2O = N(4)-acetylcytidine(34) in elongator tRNA(Met) + ADP + phosphate + CoA + H(+). Its function is as follows. Catalyzes the formation of N(4)-acetylcytidine (ac(4)C) at the wobble position of tRNA(Met), by using acetyl-CoA as an acetyl donor and ATP (or GTP). This is tRNA(Met) cytidine acetyltransferase TmcA from Shigella flexneri serotype 5b (strain 8401).